A 163-amino-acid chain; its full sequence is Large ribosomal subunit protein uL11 (163 aa).

The tract at residues 1–26 (MAETIEVLVAGGQADPGPPLGPELGP) is disordered.

It belongs to the universal ribosomal protein uL11 family. Part of the ribosomal stalk of the 50S ribosomal subunit. Interacts with L10 and the large rRNA to form the base of the stalk. L10 forms an elongated spine to which L12 dimers bind in a sequential fashion forming a multimeric L10(L12)X complex.

Functionally, forms part of the ribosomal stalk which helps the ribosome interact with GTP-bound translation factors. In Halobacterium salinarum (strain ATCC 29341 / DSM 671 / R1), this protein is Large ribosomal subunit protein uL11.